The primary structure comprises 199 residues: UPF0462 protein C4orf33 (199 aa).

The protein belongs to the UPF0462 family.

The chain is UPF0462 protein C4orf33 (C4orf33) from Homo sapiens (Human).